The chain runs to 289 residues: Bis(5'-nucleosyl)-tetraphosphatase, symmetrical (289 aa).

It belongs to the Ap4A hydrolase family.

It catalyses the reaction P(1),P(4)-bis(5'-adenosyl) tetraphosphate + H2O = 2 ADP + 2 H(+). In terms of biological role, hydrolyzes diadenosine 5',5'''-P1,P4-tetraphosphate to yield ADP. The protein is Bis(5'-nucleosyl)-tetraphosphatase, symmetrical of Pseudomonas fluorescens (strain ATCC BAA-477 / NRRL B-23932 / Pf-5).